We begin with the raw amino-acid sequence, 663 residues long: UvrABC system protein B (663 aa).

Residues 31–271 (DNIEGGEKAQ…EQSISKIQAE (241 aa)) enclose the Helicase ATP-binding domain. 44–51 (GATGTGKT) provides a ligand contact to ATP. Residues 97–120 (YYDYYQPEAYVPSSDTYIEKDSSV) carry the Beta-hairpin motif. Residues 435 to 601 (QMDDLLGEIN…TIKKDIRDLI (167 aa)) form the Helicase C-terminal domain. One can recognise a UVR domain in the interval 627–662 (QEAIKQLQKNMQEAAELLDFELAAQLRDLILELKAM).

The protein belongs to the UvrB family. As to quaternary structure, forms a heterotetramer with UvrA during the search for lesions. Interacts with UvrC in an incision complex.

Its subcellular location is the cytoplasm. The UvrABC repair system catalyzes the recognition and processing of DNA lesions. A damage recognition complex composed of 2 UvrA and 2 UvrB subunits scans DNA for abnormalities. Upon binding of the UvrA(2)B(2) complex to a putative damaged site, the DNA wraps around one UvrB monomer. DNA wrap is dependent on ATP binding by UvrB and probably causes local melting of the DNA helix, facilitating insertion of UvrB beta-hairpin between the DNA strands. Then UvrB probes one DNA strand for the presence of a lesion. If a lesion is found the UvrA subunits dissociate and the UvrB-DNA preincision complex is formed. This complex is subsequently bound by UvrC and the second UvrB is released. If no lesion is found, the DNA wraps around the other UvrB subunit that will check the other stand for damage. The sequence is that of UvrABC system protein B from Streptococcus equi subsp. equi (strain 4047).